The chain runs to 190 residues: Peptidyl-tRNA hydrolase (190 aa).

Residue Tyr14 participates in tRNA binding. The active-site Proton acceptor is His19. 3 residues coordinate tRNA: Tyr64, Asn66, and Asn112.

The protein belongs to the PTH family. In terms of assembly, monomer.

The protein localises to the cytoplasm. It catalyses the reaction an N-acyl-L-alpha-aminoacyl-tRNA + H2O = an N-acyl-L-amino acid + a tRNA + H(+). In terms of biological role, hydrolyzes ribosome-free peptidyl-tRNAs (with 1 or more amino acids incorporated), which drop off the ribosome during protein synthesis, or as a result of ribosome stalling. Catalyzes the release of premature peptidyl moieties from peptidyl-tRNA molecules trapped in stalled 50S ribosomal subunits, and thus maintains levels of free tRNAs and 50S ribosomes. The chain is Peptidyl-tRNA hydrolase from Chlorobium chlorochromatii (strain CaD3).